The primary structure comprises 533 residues: Putative replication factor C large subunit (533 aa).

Residues 1 to 11 (MSKTAKNTKTI) are compositionally biased toward polar residues. A disordered region spans residues 1-31 (MSKTAKNTKTIKSVKSVNKDNKPNKDNKDDK). The segment covering 17–31 (VNKDNKPNKDNKDDK) has biased composition (basic and acidic residues).

Belongs to the activator 1 large subunit family.

Its function is as follows. Part of the RFC clamp loader complex which loads the PCNA sliding clamp onto DNA. This Acanthamoeba polyphaga (Amoeba) protein is Putative replication factor C large subunit.